The chain runs to 570 residues: RNA polymerase I termination factor (570 aa).

Over residues M1 to N16 the composition is skewed to polar residues. Disordered regions lie at residues M1–S21, H37–W68, and S100–K138. Residues H37 to K56 are compositionally biased toward basic residues. T64 is subject to Phosphothreonine. A compositionally biased stretch (basic residues) spans R108 to I137. Residues K273–Y339 enclose the Myb-like 1 domain. The region spanning H340 to C391 is the HTH myb-type domain. The segment at residues W367–M389 is a DNA-binding region (H-T-H motif). 2 consecutive Myb-like domains span residues G392–V486 and S493–K549.

In terms of assembly, interacts with FOB1. Interacts with the RENT complex subunits NET1 and SIR2.

The protein localises to the nucleus. The protein resides in the nucleolus. Functionally, DNA-binding protein that recognizes sequence-specific replication termini (Ter sites) within rDNA. Binds to rDNA terminator elements and mediates efficient RNA polymerase I transcription termination. Required for rDNA silencing at the non-transcribed spacer 1 (NTS1). Promotes the association of SIR2 with NTS1 and contributes to maintenance of rDNA stability. The sequence is that of RNA polymerase I termination factor from Saccharomyces cerevisiae (strain ATCC 204508 / S288c) (Baker's yeast).